Consider the following 168-residue polypeptide: Signal peptidase I V (168 aa).

The Cytoplasmic portion of the chain corresponds to 1-6 (MKKRFW). Residues 7–26 (FLAGVVSVVLAIQVKNAVFI) form a helical membrane-spanning segment. Over 27–168 (DYKVEGVSMN…NIVGVISDAE (142 aa)) the chain is Extracellular. Catalysis depends on residues Ser34 and Lys75.

Belongs to the peptidase S26 family.

It localises to the cell membrane. It carries out the reaction Cleavage of hydrophobic, N-terminal signal or leader sequences from secreted and periplasmic proteins.. The sequence is that of Signal peptidase I V (sipV) from Bacillus subtilis (strain 168).